The following is a 356-amino-acid chain: DNA polymerase IV (356 aa).

In terms of domain architecture, UmuC spans Ile6–Gly187. Mg(2+)-binding residues include Asp10 and Asp105. The active site involves Glu106.

The protein belongs to the DNA polymerase type-Y family. As to quaternary structure, monomer. Mg(2+) serves as cofactor.

It localises to the cytoplasm. It catalyses the reaction DNA(n) + a 2'-deoxyribonucleoside 5'-triphosphate = DNA(n+1) + diphosphate. Poorly processive, error-prone DNA polymerase involved in untargeted mutagenesis. Copies undamaged DNA at stalled replication forks, which arise in vivo from mismatched or misaligned primer ends. These misaligned primers can be extended by PolIV. Exhibits no 3'-5' exonuclease (proofreading) activity. May be involved in translesional synthesis, in conjunction with the beta clamp from PolIII. This is DNA polymerase IV from Staphylococcus aureus (strain JH1).